The following is a 199-amino-acid chain: Securin (199 aa).

2 disordered regions span residues 1–23 (MATL…SKDG) and 58–108 (RKAL…DDAY). N-acetylalanine is present on Ala-2. Positions 7–23 (VDKDNEEPGSRLASKDG) are enriched in basic and acidic residues. Residues 58–61 (RKAL) carry the D-box motif. A TEK-box 1 motif is present at residues 68-70 (TEK). Positions 76–85 (KPLQSKQPTL) are enriched in polar residues. The TEK-box 2 motif lies at 91–93 (TEK). The residue at position 162 (Ser-162) is a Phosphoserine. The SH3-binding motif lies at 179-192 (PPSALSALDVELPP).

This sequence belongs to the securin family. As to quaternary structure, interacts with the caspase-like ESPL1, and prevents its protease activity by covering its active site. Interacts with p53/TP53 and blocks its activity probably by blocking its binding to DNA. Interacts with the Ku 70 kDa subunit of ds-DNA kinase. Interacts with PTTG1IP. Interacts with RPS10 and DNAJA1. In terms of processing, phosphorylated at Ser-162 by CDK1 during mitosis. Phosphorylated in vitro by ds-DNA kinase. Post-translationally, ubiquitinated through 'Lys-11' linkage of ubiquitin moieties by the anaphase promoting complex (APC) at the onset of anaphase, conducting to its degradation. 'Lys-11'-linked ubiquitination is mediated by the E2 ligase UBE2C/UBCH10. In terms of tissue distribution, expressed at low level in most tissues, except in adult testis, where it is highly expressed. Expressed in both spermatocytes and spermatids.

It is found in the cytoplasm. It localises to the nucleus. Functionally, regulatory protein, which plays a central role in chromosome stability, in the p53/TP53 pathway, and DNA repair. Probably acts by blocking the action of key proteins. During the mitosis, it blocks Separase/ESPL1 function, preventing the proteolysis of the cohesin complex and the subsequent segregation of the chromosomes. At the onset of anaphase, it is ubiquitinated, conducting to its destruction and to the liberation of ESPL1. Its function is however not limited to a blocking activity, since it is required to activate ESPL1. Negatively regulates the transcriptional activity and related apoptosis activity of p53/TP53. The negative regulation of p53/TP53 may explain the strong transforming capability of the protein when it is overexpressed. May also play a role in DNA repair via its interaction with Ku, possibly by connecting DNA damage-response pathways with sister chromatid separation. The chain is Securin (Pttg1) from Rattus norvegicus (Rat).